A 416-amino-acid polypeptide reads, in one-letter code: RNA polymerase sigma-C factor (416 aa).

The Polymerase core binding motif lies at 205-218; it reads DLVQEGTLGLERAV. Positions 374–393 form a DNA-binding region, H-T-H motif; the sequence is LAEIGRALDLSRERVRQIES.

This sequence belongs to the sigma-70 factor family.

Sigma factors are initiation factors that promote the attachment of RNA polymerase to specific initiation sites and are then released. The sequence is that of RNA polymerase sigma-C factor (sigC) from Nostoc sp. (strain PCC 7120 / SAG 25.82 / UTEX 2576).